A 476-amino-acid polypeptide reads, in one-letter code: Serine/threonine-protein kinase Chk1 (476 aa).

The interaction with CLSPN stretch occupies residues 1–265 (MAVPFVEDWD…IPDIKKDRWY (265 aa)). In terms of domain architecture, Protein kinase spans 9–265 (WDLVQTLGEG…IPDIKKDRWY (257 aa)). Residues 15-23 (LGEGAYGEV) and lysine 38 each bind ATP. Aspartate 130 (proton acceptor) is an active-site residue. Lysine 132 participates in a covalent cross-link: Glycyl lysine isopeptide (Lys-Gly) (interchain with G-Cter in ubiquitin). The interval 267-329 (KPLNRGAKRP…EPRTGLSLWD (63 aa)) is disordered. A Phosphoserine; by PKB/AKT1 modification is found at serine 280. Residues 280-291 (SGGMSESSSGFS) show a composition bias toward low complexity. Residues serine 286, serine 296, and serine 301 each carry the phosphoserine modification. Over residues 298–320 (LDFSPINSGSSEENVKFSSSQPE) the composition is skewed to polar residues. A phosphoserine; by ATM and ATR mark is found at serine 317 and serine 345. The tract at residues 391–476 (QCLKETFEKL…SSQKVWFPVT (86 aa)) is autoinhibitory region. Lysine 436 is covalently cross-linked (Glycyl lysine isopeptide (Lys-Gly) (interchain with G-Cter in ubiquitin)). A phosphoserine mark is found at serine 463, serine 467, and serine 468.

The protein belongs to the protein kinase superfamily. CAMK Ser/Thr protein kinase family. NIM1 subfamily. In terms of assembly, interacts (phosphorylated by ATR) with RAD51. Interacts with and phosphorylates CLSPN, an adapter protein that regulates the ATR-dependent phosphorylation of CHEK1. Interacts with BRCA1. Interacts with and phosphorylates CDC25A, CDC25B and CDC25C. Interacts with FBXO6, which regulates CHEK1. Interacts with PPM1D, which regulates CHEK1 through dephosphorylation. Interacts with TIMELESS; DNA damage-dependent. Interacts with FEM1B; activates CHEK1 in response to stress. Interacts with TLK1. Interacts with XPO1 and YWHAZ. Interacts with CDK5RAP3; antagonizes CHEK1. In terms of processing, phosphorylated by ATR in a RAD17-dependent manner in response to ultraviolet irradiation and inhibition of DNA replication. Phosphorylated by ATM in response to ionizing irradiation. ATM and ATR can both phosphorylate Ser-317 and Ser-345 and this results in enhanced kinase activity. Phosphorylation at Ser-345 induces a change in the conformation of the protein, activates the kinase activity and is a prerequisite for interaction with FBXO6 and subsequent ubiquitination at Lys-436. Phosphorylation at Ser-345 also increases binding to 14-3-3 proteins and promotes nuclear retention. Conversely, dephosphorylation at Ser-345 by PPM1D may contribute to exit from checkpoint mediated cell cycle arrest. Phosphorylation at Ser-280 by AKT1/PKB, may promote mono and/or diubiquitination. Also phosphorylated at undefined residues during mitotic arrest, resulting in decreased activity. Post-translationally, ubiquitinated. Mono or diubiquitination promotes nuclear exclusion. The activated form (phosphorylated on Ser-345) is polyubiquitinated at Lys-436 by some SCF-type E3 ubiquitin ligase complex containing FBXO6 promoting its degradation. Ubiquitination and degradation are required to terminate the checkpoint and ensure that activated CHEK1 does not accumulate as cells progress through S phase, when replication forks encounter transient impediments during normal DNA replication. 'Lys-63'-mediated ubiquitination by TRAF4 at Lys-132 activates cell cycle arrest and activation of DNA repair. Proteolytically cleaved at the C-terminus by SPRTN during normal DNA replication, thereby promoting CHEK1 removal from chromatin and activating the protein kinase activity. Expressed in brain, heart, liver, lung, skeletal muscle, spleen and testis. In terms of tissue distribution, expressed only in liver.

It is found in the nucleus. It localises to the chromosome. The protein localises to the cytoplasm. Its subcellular location is the cytoskeleton. The protein resides in the microtubule organizing center. It is found in the centrosome. It catalyses the reaction L-seryl-[protein] + ATP = O-phospho-L-seryl-[protein] + ADP + H(+). It carries out the reaction L-threonyl-[protein] + ATP = O-phospho-L-threonyl-[protein] + ADP + H(+). With respect to regulation, activated through phosphorylation predominantly by ATR but also by ATM in response to DNA damage or inhibition of DNA replication. Activation is modulated by several mediators including CLSPN, BRCA1 and FEM1B. Proteolytic cleavage at the C-terminus by SPRTN during normal DNA replication activates the protein kinase activity. In terms of biological role, serine/threonine-protein kinase which is required for checkpoint-mediated cell cycle arrest and activation of DNA repair in response to the presence of DNA damage or unreplicated DNA. May also negatively regulate cell cycle progression during unperturbed cell cycles. This regulation is achieved by a number of mechanisms that together help to preserve the integrity of the genome. Recognizes the substrate consensus sequence [R-X-X-S/T]. Binds to and phosphorylates CDC25A, CDC25B and CDC25C. Phosphorylation of CDC25A at 'Ser-178' and 'Thr-507' and phosphorylation of CDC25C at 'Ser-216' creates binding sites for 14-3-3 proteins which inhibit CDC25A and CDC25C. Phosphorylation of CDC25A at 'Ser-76', 'Ser-124', 'Ser-178', 'Ser-279' and 'Ser-293' promotes proteolysis of CDC25A. Phosphorylation of CDC25A at 'Ser-76' primes the protein for subsequent phosphorylation at 'Ser-79', 'Ser-82' and 'Ser-88' by NEK11, which is required for polyubiquitination and degradation of CDCD25A. Inhibition of CDC25 leads to increased inhibitory tyrosine phosphorylation of CDK-cyclin complexes and blocks cell cycle progression. Also phosphorylates NEK6. Binds to and phosphorylates RAD51 at 'Thr-309', which promotes the release of RAD51 from BRCA2 and enhances the association of RAD51 with chromatin, thereby promoting DNA repair by homologous recombination. Phosphorylates multiple sites within the C-terminus of TP53, which promotes activation of TP53 by acetylation and promotes cell cycle arrest and suppression of cellular proliferation. Also promotes repair of DNA cross-links through phosphorylation of FANCE. Binds to and phosphorylates TLK1 at 'Ser-743', which prevents the TLK1-dependent phosphorylation of the chromatin assembly factor ASF1A. This may enhance chromatin assembly both in the presence or absence of DNA damage. May also play a role in replication fork maintenance through regulation of PCNA. May regulate the transcription of genes that regulate cell-cycle progression through the phosphorylation of histones. Phosphorylates histone H3.1 (to form H3T11ph), which leads to epigenetic inhibition of a subset of genes. May also phosphorylate RB1 to promote its interaction with the E2F family of transcription factors and subsequent cell cycle arrest. Phosphorylates SPRTN, promoting SPRTN recruitment to chromatin. Reduces replication stress and activates the G2/M checkpoint, by phosphorylating and inactivating PABIR1/FAM122A and promoting the serine/threonine-protein phosphatase 2A-mediated dephosphorylation and stabilization of WEE1 levels and activity. This Rattus norvegicus (Rat) protein is Serine/threonine-protein kinase Chk1 (Chek1).